We begin with the raw amino-acid sequence, 324 residues long: Glutathione synthetase (324 aa).

The region spanning 125–312 is the ATP-grasp domain; it reads EKLFTTTHFP…ISTIILDNLE (188 aa). Position 152–209 (152–209) interacts with ATP; that stretch reads FIKTYKDIIIKPLHGMAGLSIFRIKEHDPNTSVIIETMTKYETIPCISQNYITDIQKG. Glu-283 and Asn-285 together coordinate Mg(2+).

This sequence belongs to the prokaryotic GSH synthase family. The cofactor is Mg(2+). Requires Mn(2+) as cofactor.

It catalyses the reaction gamma-L-glutamyl-L-cysteine + glycine + ATP = glutathione + ADP + phosphate + H(+). It functions in the pathway sulfur metabolism; glutathione biosynthesis; glutathione from L-cysteine and L-glutamate: step 2/2. The sequence is that of Glutathione synthetase from Buchnera aphidicola subsp. Baizongia pistaciae (strain Bp).